The chain runs to 444 residues: N-succinylarginine dihydrolase (444 aa).

Substrate contacts are provided by residues 19 to 28 (AGLSFGNVAS), Asn110, and 137 to 138 (HR). Glu174 is an active-site residue. Arg214 is a substrate binding site. Residue His250 is part of the active site. 2 residues coordinate substrate: Asp252 and Asn362. The active-site Nucleophile is Cys368.

It belongs to the succinylarginine dihydrolase family. As to quaternary structure, homodimer.

The catalysed reaction is N(2)-succinyl-L-arginine + 2 H2O + 2 H(+) = N(2)-succinyl-L-ornithine + 2 NH4(+) + CO2. It participates in amino-acid degradation; L-arginine degradation via AST pathway; L-glutamate and succinate from L-arginine: step 2/5. Catalyzes the hydrolysis of N(2)-succinylarginine into N(2)-succinylornithine, ammonia and CO(2). This is N-succinylarginine dihydrolase from Shewanella baltica (strain OS185).